The following is a 425-amino-acid chain: MIDIKVLRENPELMKENIVLRNLDPNKYDVDYILELDAKRRSLQKELDTLKAQRNKISQEIGKRKGEEREELIKKAKTLKEKIEELEKEYEKIEKELYLKLWQLPNFLSPKAPKGKDEKDNIEIKRWGNIKTFTFTPKDHLDLALLNDLVDFERGSKVTGSNFYYLKNEAVLLEFALFRLVIDTLLPEGFKLFITPDLARMEIIDGIGFQPRGPEAQIYRVEDTDLGLIATAEITLGGYHKDEILDELDLPLKYLGFSHCFRTEAGAYGRYNRGLYRVHQFSKAEIFIICRPEDSEEMHEYILSLEEKIFQKLEIPYRVVDICSGDLGAPAARKFDIEAWMPGRGDFGEVTSCSNCTDYQARRLNIRFRRVTGEVEYVHMLNGTAIAISRALIAILENYQQEDGSILIPKVLQPYIGISEIKPKK.

Position 231 to 233 (231 to 233) interacts with L-serine; the sequence is TAE. ATP-binding positions include 262–264 and valine 278; that span reads RTE. Glutamate 285 serves as a coordination point for L-serine. 349-352 serves as a coordination point for ATP; it reads EVTS. Threonine 384 serves as a coordination point for L-serine.

The protein belongs to the class-II aminoacyl-tRNA synthetase family. Type-1 seryl-tRNA synthetase subfamily. In terms of assembly, homodimer. The tRNA molecule binds across the dimer.

The protein resides in the cytoplasm. It catalyses the reaction tRNA(Ser) + L-serine + ATP = L-seryl-tRNA(Ser) + AMP + diphosphate + H(+). The catalysed reaction is tRNA(Sec) + L-serine + ATP = L-seryl-tRNA(Sec) + AMP + diphosphate + H(+). Its pathway is aminoacyl-tRNA biosynthesis; selenocysteinyl-tRNA(Sec) biosynthesis; L-seryl-tRNA(Sec) from L-serine and tRNA(Sec): step 1/1. In terms of biological role, catalyzes the attachment of serine to tRNA(Ser). Is also able to aminoacylate tRNA(Sec) with serine, to form the misacylated tRNA L-seryl-tRNA(Sec), which will be further converted into selenocysteinyl-tRNA(Sec). The chain is Serine--tRNA ligase from Dictyoglomus thermophilum (strain ATCC 35947 / DSM 3960 / H-6-12).